Here is a 307-residue protein sequence, read N- to C-terminus: MmsAB operon regulatory protein (307 aa).

Residues 201–299 enclose the HTH araC/xylS-type domain; sequence DGLHAYMREH…GLSPSAYRQR (99 aa). 2 DNA-binding regions (H-T-H motif) span residues 218–239 and 266–289; these read ERLA…KAIT and VARV…SKVM.

In terms of biological role, regulatory protein for the mmsAB operon. Activates the transcription of the mmsAB genes. This Pseudomonas aeruginosa (strain ATCC 15692 / DSM 22644 / CIP 104116 / JCM 14847 / LMG 12228 / 1C / PRS 101 / PAO1) protein is MmsAB operon regulatory protein.